Consider the following 586-residue polypeptide: Arginine--tRNA ligase (586 aa).

Residues 128-138 (ANPTGPLHVGH) carry the 'HIGH' region motif.

This sequence belongs to the class-I aminoacyl-tRNA synthetase family. Monomer.

The protein localises to the cytoplasm. The enzyme catalyses tRNA(Arg) + L-arginine + ATP = L-arginyl-tRNA(Arg) + AMP + diphosphate. This is Arginine--tRNA ligase from Thioalkalivibrio sulfidiphilus (strain HL-EbGR7).